We begin with the raw amino-acid sequence, 320 residues long: UPF0053 protein in cps region (320 aa).

The helical transmembrane segment at cysteine 4 to isoleucine 24 threads the bilayer. 2 consecutive CBS domains span residues methionine 121–leucine 183 and leucine 186–valine 244.

Belongs to the UPF0053 family.

The protein resides in the cell membrane. In Klebsiella pneumoniae, this protein is UPF0053 protein in cps region.